The following is a 132-amino-acid chain: D-ribose pyranase (132 aa).

Catalysis depends on His20, which acts as the Proton donor. Residues Asp28, His99, and 121 to 123 (YSN) each bind substrate.

It belongs to the RbsD / FucU family. RbsD subfamily. Homodecamer.

Its subcellular location is the cytoplasm. It catalyses the reaction beta-D-ribopyranose = beta-D-ribofuranose. The protein operates within carbohydrate metabolism; D-ribose degradation; D-ribose 5-phosphate from beta-D-ribopyranose: step 1/2. Functionally, catalyzes the interconversion of beta-pyran and beta-furan forms of D-ribose. The chain is D-ribose pyranase from Streptococcus uberis (strain ATCC BAA-854 / 0140J).